The following is a 358-amino-acid chain: Holliday junction branch migration complex subunit RuvB (358 aa).

The large ATPase domain (RuvB-L) stretch occupies residues 1–183; it reads MAEPSLVSGG…FGFTGHLEFY (183 aa). ATP is bound by residues Leu22, Arg23, Gly64, Lys67, Thr68, Thr69, 130-132, Arg173, Tyr183, and Arg220; that span reads EDF. Residue Thr68 participates in Mg(2+) binding. Residues 184–254 are small ATPAse domain (RuvB-S); it reads SVAELELVLR…SASAALDMYE (71 aa). The segment at 257–358 is head domain (RuvB-H); sequence ERGLDRLDRS…NHAESVDTVG (102 aa). The DNA site is built by Arg312 and Arg317.

Belongs to the RuvB family. As to quaternary structure, homohexamer. Forms an RuvA(8)-RuvB(12)-Holliday junction (HJ) complex. HJ DNA is sandwiched between 2 RuvA tetramers; dsDNA enters through RuvA and exits via RuvB. An RuvB hexamer assembles on each DNA strand where it exits the tetramer. Each RuvB hexamer is contacted by two RuvA subunits (via domain III) on 2 adjacent RuvB subunits; this complex drives branch migration. In the full resolvosome a probable DNA-RuvA(4)-RuvB(12)-RuvC(2) complex forms which resolves the HJ.

Its subcellular location is the cytoplasm. The enzyme catalyses ATP + H2O = ADP + phosphate + H(+). Its function is as follows. The RuvA-RuvB-RuvC complex processes Holliday junction (HJ) DNA during genetic recombination and DNA repair, while the RuvA-RuvB complex plays an important role in the rescue of blocked DNA replication forks via replication fork reversal (RFR). RuvA specifically binds to HJ cruciform DNA, conferring on it an open structure. The RuvB hexamer acts as an ATP-dependent pump, pulling dsDNA into and through the RuvAB complex. RuvB forms 2 homohexamers on either side of HJ DNA bound by 1 or 2 RuvA tetramers; 4 subunits per hexamer contact DNA at a time. Coordinated motions by a converter formed by DNA-disengaged RuvB subunits stimulates ATP hydrolysis and nucleotide exchange. Immobilization of the converter enables RuvB to convert the ATP-contained energy into a lever motion, pulling 2 nucleotides of DNA out of the RuvA tetramer per ATP hydrolyzed, thus driving DNA branch migration. The RuvB motors rotate together with the DNA substrate, which together with the progressing nucleotide cycle form the mechanistic basis for DNA recombination by continuous HJ branch migration. Branch migration allows RuvC to scan DNA until it finds its consensus sequence, where it cleaves and resolves cruciform DNA. This chain is Holliday junction branch migration complex subunit RuvB, found in Paenarthrobacter aurescens (strain TC1).